The following is a 418-amino-acid chain: STAM-binding protein-like A (418 aa).

The disordered stretch occupies residues 199-218; the sequence is PDVHGPPQASLSPQTPPAGA. Positions 251–382 constitute an MPN domain; that stretch reads LFVPAELCQR…LTDYGMDDVG (132 aa). Residues H329, H331, D342, H344, C384, H390, and H392 each contribute to the Zn(2+) site. Residues 329–342 carry the JAMM motif motif; that stretch reads HTHPTQTAFLSSVD.

It belongs to the peptidase M67C family. The cofactor is Zn(2+).

Its function is as follows. Zinc metalloprotease that specifically cleaves 'Lys-63'-linked polyubiquitin chains. Does not cleave 'Lys-48'-linked polyubiquitin chains. Functions at the endosome and is able to oppose the ubiquitin-dependent sorting of receptors to lysosomes. This Danio rerio (Zebrafish) protein is STAM-binding protein-like A (stambpa).